A 278-amino-acid polypeptide reads, in one-letter code: Large ribosomal subunit protein uL2 (278 aa).

The interval 208-278 is disordered; the sequence is AGRSRWMGKR…LIIRHRKGRK (71 aa). A compositionally biased stretch (basic residues) spans 209–219; that stretch reads GRSRWMGKRPQ. The segment covering 258–270 has biased composition (basic and acidic residues); that stretch reads KTRDSKKASEKLI.

Belongs to the universal ribosomal protein uL2 family. Part of the 50S ribosomal subunit. Forms a bridge to the 30S subunit in the 70S ribosome.

Functionally, one of the primary rRNA binding proteins. Required for association of the 30S and 50S subunits to form the 70S ribosome, for tRNA binding and peptide bond formation. It has been suggested to have peptidyltransferase activity; this is somewhat controversial. Makes several contacts with the 16S rRNA in the 70S ribosome. The polypeptide is Large ribosomal subunit protein uL2 (Lactobacillus delbrueckii subsp. bulgaricus (strain ATCC 11842 / DSM 20081 / BCRC 10696 / JCM 1002 / NBRC 13953 / NCIMB 11778 / NCTC 12712 / WDCM 00102 / Lb 14)).